The chain runs to 410 residues: MAVKTLQDLLNEGVEGRGVLVRSDLNVPLDDNGQITDPGRIIASIPTLKALVEAGAKVVVTAHLGRPKGEPDPKFSLAPVAAKLAELLGRNVQLAGDVVGYDALSRSEGLTDGDVLLLENVRFDPRETSKDEAERGKLAAALVELVGEDGAFVSDGFGVVHRKQASVYDVAKLLPHYAGTLVAAEVDVLAKLTDNTERPYAVVLGGSKVSDKLAVIEALAPKVDTLVIGGGMCFTFLAAQGLSVGSSLLQEEMIDTCKGLLERYADVIHLPRDVVVADSFSADAESKCVPANEIPDGWMGLDIGAESVDRFAALLTEAKTVFWNGPMGVFEFEKFAAGTRGVAEAIVAATGKGAFTVVGGGDSAAAVRALGLPEDGFSHISTGGGASLEYLEGKELPGISVLEDTAPEGS.

Substrate-binding positions include 24-26 (DLN), R40, 63-66 (HLGR), R122, and R162. Residues K212, G300, E331, and 360–363 (GGDS) each bind ATP.

Belongs to the phosphoglycerate kinase family. Monomer.

It is found in the cytoplasm. The enzyme catalyses (2R)-3-phosphoglycerate + ATP = (2R)-3-phospho-glyceroyl phosphate + ADP. It participates in carbohydrate degradation; glycolysis; pyruvate from D-glyceraldehyde 3-phosphate: step 2/5. The protein is Phosphoglycerate kinase of Nocardia farcinica (strain IFM 10152).